A 1522-amino-acid chain; its full sequence is Sodium channel protein 1 brain (1522 aa).

Topologically, residues 1 to 50 are cytoplasmic; the sequence is MDEKYTAKNRDKTFVVIEKRFKKNIIHRFSAKRSLFLFTPRNPIRRLAVC. Residues 41–342 form an I repeat; sequence RNPIRRLAVC…VATAYELEVK (302 aa). Residues 51–70 form a helical membrane-spanning segment; the sequence is IATNVCFDYFLMFTIMINCV. Residues 71–77 lie on the Extracellular side of the membrane; sequence FLAMPDI. A helical membrane pass occupies residues 78–99; it reads SEFAEYIFLGIYTMEMAIKLVA. Residues 100-112 lie on the Cytoplasmic side of the membrane; the sequence is GGFFIDKYTYLRD. Residues 113–134 form a helical membrane-spanning segment; it reads AWNCLDFTVIMISYITLLLQTI. The Extracellular segment spans residues 135 to 143; that stretch reads NDKVISDIT. Residues 144–167 traverse the membrane as a helical; Voltage-sensor segment; that stretch reads GLRTFRVLRALRTLSIIPGLKTMV. At 168-179 the chain is on the cytoplasmic side; it reads NALLRALRMLIS. A helical transmembrane segment spans residues 180–201; sequence VLILILFCLWIFSQAGVQLFGG. The Extracellular portion of the chain corresponds to 202–278; it reads ALRHKCVLQI…PNYGYTNFDS (77 aa). C207 and C255 are oxidised to a cystine. 2 N-linked (GlcNAc...) asparagine glycosylation sites follow: N248 and N258. An intramembrane region (pore-forming) is located at residues 279-303; it reads IGWSMLISFQLLTQDYWEDVYNKVI. At 304 to 308 the chain is on the extracellular side; that stretch reads RAHSP. A helical membrane pass occupies residues 309 to 331; sequence WTVIYFIVINFFGSLYLMNLMLA. At 332-406 the chain is on the cytoplasmic side; the sequence is VVATAYELEV…WLRVQSFAHC (75 aa). Residues 393–647 form an II repeat; the sequence is CYNPWLRVQS…EQEVEVSSFA (255 aa). Residues 407-426 traverse the membrane as a helical segment; the sequence is IITDSFTEVFIIFIIVLNTV. The Extracellular segment spans residues 427–442; that stretch reads FLAMEHHGMSMELKNV. A helical transmembrane segment spans residues 443–464; the sequence is LKVANYVFTTVFVLEAILKLLA. Topologically, residues 465-472 are cytoplasmic; that stretch reads FNKQYFKS. Residues 473-491 traverse the membrane as a helical segment; that stretch reads GWNICDLVVVVASLIDLGV. Residues 492–498 are Extracellular-facing; sequence EGLKGVS. The helical; Voltage-sensor transmembrane segment at 499–522 threads the bilayer; that stretch reads VFRSFRLLRVFHLAQSWTTMRLLL. The Cytoplasmic portion of the chain corresponds to 523–531; that stretch reads CIILNTLGS. A helical membrane pass occupies residues 532-553; sequence LGYLTIILIIVIYIFAVTGLQL. Over 554 to 575 the chain is Extracellular; it reads FHTEYTPDKFRGEPVPRWNFND. An intramembrane region (pore-forming) is located at residues 576–596; that stretch reads FLHSFMMVFRILCGEWIEPMY. Over 597–607 the chain is Extracellular; it reads DCMRACNGLCF. A disulfide bridge links C598 with C606. Residues 608–628 form a helical membrane-spanning segment; sequence LIFIPVTVFGKTLFFLFIGLV. Over 629-777 the chain is Cytoplasmic; that stretch reads LGAFGSDTVE…WNNFRRQLMM (149 aa). The III repeat unit spans residues 770 to 1074; the sequence is NFRRQLMMVC…QNYYNTLKKL (305 aa). A helical membrane pass occupies residues 778–797; it reads VCENKYFETGVLVIIFASSI. The Extracellular portion of the chain corresponds to 798–815; it reads LLAFEDIYLNEKPRLKLA. Residues 816–837 traverse the membrane as a helical segment; sequence IFYLDITFCLLFFLEMVLKLVA. Residues 838–846 are Cytoplasmic-facing; the sequence is LGFVHYYTH. Residues 847–868 traverse the membrane as a helical segment; sequence FWTILDFTIVIITVISLAASGL. The Extracellular portion of the chain corresponds to 869–874; sequence GMEQIT. Residues 875 to 898 traverse the membrane as a helical; Voltage-sensor segment; the sequence is AFRSLRTLRALRPLRAVSRWQGMK. Residues 899 to 915 lie on the Cytoplasmic side of the membrane; sequence IIVNALMLSIPSIFNVL. The helical transmembrane segment at 916–937 threads the bilayer; sequence LVCVVFWLIFAIMGVQLFAGKF. The Extracellular portion of the chain corresponds to 938-976; it reads YKCVNETNMRIPPTEVANKIECYNKNYTWVNSNVNFDNV. Residues N942 and N963 are each glycosylated (N-linked (GlcNAc...) asparagine). An intramembrane region (pore-forming) is located at residues 977–998; the sequence is GGAFLALFQVATFEGWMEIMAD. Residues 999-1009 are Extracellular-facing; it reads AVDVTEVDEQP. A helical membrane pass occupies residues 1010-1022; the sequence is KFEATVYYYFYFV. Over 1023–1100 the chain is Cytoplasmic; the sequence is LFIIFGSFFV…QAVVYDLVMS (78 aa). T1076 is modified (phosphothreonine; by PKC). Residues 1083–1386 form an IV repeat; it reads VKRPKNKCQA…WEQYDPLATQ (304 aa). Residues 1101 to 1120 form a helical membrane-spanning segment; that stretch reads NQFEIFITTIIITNMIFMAF. At 1121 to 1132 the chain is on the extracellular side; the sequence is EHYNQSEVVTEV. N1124 carries N-linked (GlcNAc...) asparagine glycosylation. The chain crosses the membrane as a helical span at residues 1133–1154; sequence LATANIAFTILYAVEAIIKIIG. At 1155–1162 the chain is on the cytoplasmic side; the sequence is LRIHYLRN. The chain crosses the membrane as a helical span at residues 1163 to 1184; it reads LWNVFDFLVVTLSVMDAFLNDI. At 1185–1194 the chain is on the extracellular side; it reads FGDGIFMNPS. Residues 1195-1218 traverse the membrane as a helical; Voltage-sensor segment; it reads LLRVARMFRIGRIIRLIKWAKGMR. Residues 1219-1236 lie on the Cytoplasmic side of the membrane; that stretch reads KLLFALVISLPALFNIGA. A helical membrane pass occupies residues 1237–1258; the sequence is LLMLVMFIYTIIGMSSFGQIKL. Topologically, residues 1259–1270 are extracellular; the sequence is SGALNDQVNFQT. The segment at residues 1271–1293 is an intramembrane region (pore-forming); sequence FGKTFLLLVRLATSAGWNDILGP. The Extracellular portion of the chain corresponds to 1294–1323; the sequence is LLIQPPNCDPNYITTSTGEKIKVVNGDCGM. A helical transmembrane segment spans residues 1324-1346; that stretch reads PWLAISYMVSYIIIVFMIVFNMY. The Cytoplasmic segment spans residues 1347–1522; it reads IAVILENFNQ…FIISAPETAV (176 aa).

Belongs to the sodium channel (TC 1.A.1.10) family.

The protein localises to the cell membrane. Mediates the voltage-dependent sodium ion permeability of excitable membranes. Assuming opened or closed conformations in response to the voltage difference across the membrane, the protein forms a sodium-selective channel through which Na(+) ions may pass in accordance with their electrochemical gradient. The sequence is that of Sodium channel protein 1 brain from Heterololigo bleekeri (Spear squid).